We begin with the raw amino-acid sequence, 428 residues long: Tyrosine--tRNA ligase (428 aa).

Tyrosine 41 lines the L-tyrosine pocket. Residues 46-55 (PTADSLHLGH) carry the 'HIGH' region motif. Residues tyrosine 179 and glutamine 183 each coordinate L-tyrosine. Positions 239–243 (KFGKT) match the 'KMSKS' region motif. An ATP-binding site is contributed by lysine 242. The 58-residue stretch at 361–418 (ADLLQALVDSELQPSRGQARKTVASNAVTINGEKQADPEYVFSDSDRLFGRYTLLRRG) folds into the S4 RNA-binding domain.

The protein belongs to the class-I aminoacyl-tRNA synthetase family. TyrS type 1 subfamily. In terms of assembly, homodimer.

Its subcellular location is the cytoplasm. The catalysed reaction is tRNA(Tyr) + L-tyrosine + ATP = L-tyrosyl-tRNA(Tyr) + AMP + diphosphate + H(+). Its function is as follows. Catalyzes the attachment of tyrosine to tRNA(Tyr) in a two-step reaction: tyrosine is first activated by ATP to form Tyr-AMP and then transferred to the acceptor end of tRNA(Tyr). The chain is Tyrosine--tRNA ligase from Klebsiella pneumoniae subsp. pneumoniae (strain ATCC 700721 / MGH 78578).